The sequence spans 177 residues: Large ribosomal subunit protein uL5 (177 aa).

Belongs to the universal ribosomal protein uL5 family. As to quaternary structure, part of the 50S ribosomal subunit; part of the 5S rRNA/L5/L18/L25 subcomplex. Contacts the 5S rRNA and the P site tRNA. Forms a bridge to the 30S subunit in the 70S ribosome.

In terms of biological role, this is one of the proteins that bind and probably mediate the attachment of the 5S RNA into the large ribosomal subunit, where it forms part of the central protuberance. In the 70S ribosome it contacts protein S13 of the 30S subunit (bridge B1b), connecting the 2 subunits; this bridge is implicated in subunit movement. Contacts the P site tRNA; the 5S rRNA and some of its associated proteins might help stabilize positioning of ribosome-bound tRNAs. This is Large ribosomal subunit protein uL5 from Ehrlichia canis (strain Jake).